The sequence spans 542 residues: Keratin, type II cytoskeletal 75 (542 aa).

Residues 1–26 (MSRQSTVTFHSGSRRGFSTASATTPT) show a composition bias toward polar residues. The interval 1–44 (MSRQSTVTFHSGSRRGFSTASATTPTAGRSRFSSVSVARSSGNS) is disordered. Positions 1-139 (MSRQSTVTFH…DPTIQRVRKE (139 aa)) are head. Over residues 27–42 (AGRSRFSSVSVARSSG) the composition is skewed to low complexity. Positions 140-175 (EREQIKTLNNKFASFIDKVRFLEQQNKVLETKWNLL) are coil 1A. The 314-residue stretch at 140-453 (EREQIKTLNN…KLLEGEECRL (314 aa)) folds into the IF rod domain. The interval 176-194 (QEQGSRTVRQNLEPFFDAY) is linker 1. The tract at residues 195–287 (VNDLRRQLDS…VYEAELSQMQ (93 aa)) is coil 1B. A linker 12 region spans residues 288–310 (NQVSDTSVVLSMDNNRSLDLDSI). The interval 311–449 (IAEVKAQYED…ATYRKLLEGE (139 aa)) is coil 2. The tract at residues 450–542 (ECRLSGEGVS…TSSSRKSYKH (93 aa)) is tail. Residues 514-542 (TSSSRGPVGSGSSIKFVSSTSSSRKSYKH) are disordered.

Belongs to the intermediate filament family. As to quaternary structure, heterodimer of a type I and a type II keratin. May associate with KRT17.

In terms of biological role, plays a central role in hair and nail formation. Essential component of keratin intermediate filaments in the companion layer of the hair follicle. The chain is Keratin, type II cytoskeletal 75 (Krt75) from Rattus norvegicus (Rat).